A 707-amino-acid polypeptide reads, in one-letter code: Complement C1r-A subcomponent (707 aa).

Residues 1–16 (MWLFALLVTLFYGVEG) form the signal peptide. A CUB 1 domain is found at 17-140 (SIYLPQKLYG…KGFLAYYQAV (124 aa)). Residues Glu65, Asp73, and Asp118 each contribute to the Ca(2+) site. Cys70 and Cys88 are disulfide-bonded. N-linked (GlcNAc...) asparagine glycosylation occurs at Asn124. Ca(2+) contacts are provided by Asp141, Leu142, and Glu144. The region spanning 141–189 (DLDECASQPNSVEEGLQPRCQHLCHNYVGGYFCSCHPGYELQKDGQSCQ) is the EGF-like; calcium-binding domain. Disulfide bonds link Cys145–Cys164, Cys160–Cys173, Cys175–Cys188, and Cys192–Cys219. The Ca(2+) site is built by Asn166, Tyr167, and Gly170. The residue at position 166 (Asn166) is a (3R)-3-hydroxyasparagine. The 113-residue stretch at 192-304 (CSSELYTEPS…RGWKLHYTTE (113 aa)) folds into the CUB 2 domain. Ser205 is subject to Phosphoserine; by CK2. The N-linked (GlcNAc...) asparagine glycan is linked to Asn220. Positions 242, 252, 289, and 293 each coordinate Ca(2+). Cys249 and Cys267 are disulfide-bonded. 2 consecutive Sushi domains span residues 306–372 (IKCP…RCKI) and 373–448 (KNCG…RCLP). 5 disulfides stabilise this stretch: Cys308–Cys357, Cys337–Cys370, Cys375–Cys428, Cys405–Cys446, and Cys450–Cys579. The Peptidase S1 domain maps to 463-704 (IIRGQPARPG…YVDWIKKEMG (242 aa)). Catalysis depends on charge relay system residues His501 and Asp559. Asn583 carries an N-linked (GlcNAc...) asparagine glycan. 2 cysteine pairs are disulfide-bonded: Cys622-Cys641 and Cys652-Cys682. Ser656 functions as the Charge relay system in the catalytic mechanism.

This sequence belongs to the peptidase S1 family. As to quaternary structure, core component of the complement C1 complex, a calcium-dependent complex composed of 1 molecule of the C1Q subcomplex, 2 molecules of C1R and 2 molecules of C1S. The C1Q subcomplex is composed 18 subunits: 3 chains of C1QA, C1QB, and C1QC trimerize to form 6 collagen-like triple helices connected to six globular ligand-recognition modules. Within the C1 complex, C1R is a dimer of identical chains, each of which is activated by cleavage into two chains, heavy and light, connected by disulfide bonds. Post-translationally, cleaved and activated by autocatalytic processing to generate Complement C1r subcomponent heavy and light chains that are connected by disulfide bonds. The iron and 2-oxoglutarate dependent 3-hydroxylation of aspartate and asparagine is (R) stereospecific within EGF domains.

The protein resides in the secreted. It is found in the cell surface. The catalysed reaction is Selective cleavage of Lys(or Arg)-|-Ile bond in complement subcomponent C1s to form the active form of C1s (EC 3.4.21.42).. Its activity is regulated as follows. Activated by the C1Q subcomplex of the C1 complex following C1Q binding to immunoglobulins (IgG or IgM) complexed with antigens to form antigen-antibody complexes on the surface of pathogens. Immunoglobulin-binding promotes autoactivation of C1R, which results in the cleavage of the Arg-Ile bond in the catalytic domain. In terms of biological role, serine protease component of the complement C1 complex, a multiprotein complex that initiates the classical pathway of the complement system, a cascade of proteins that leads to phagocytosis and breakdown of pathogens and signaling that strengthens the adaptive immune system. C1R catalyzes the first enzymatic step in the classical complement pathway: it is activated by the C1Q subcomplex of the C1 complex, which associates with IgG or IgM immunoglobulins complexed with antigens to form antigen-antibody complexes on the surface of pathogens. Immunoglobulin-binding promotes the autocatalytic cleavage and activation of C1R. Activated C1R then cleaves and activates C1S, the second protease of the classical complement pathway. It is unclear if C1R activates C1S within single, strained C1 complexes or between neighboring C1 complexes on surfaces. In Mus musculus (Mouse), this protein is Complement C1r-A subcomponent (C1ra).